The chain runs to 370 residues: Uroporphyrinogen decarboxylase (370 aa).

Residues 29–33 (RQAGR), Asp79, Tyr155, Ser210, and His342 contribute to the substrate site.

This sequence belongs to the uroporphyrinogen decarboxylase family. Homodimer.

The protein resides in the cytoplasm. It catalyses the reaction uroporphyrinogen III + 4 H(+) = coproporphyrinogen III + 4 CO2. Its pathway is porphyrin-containing compound metabolism; protoporphyrin-IX biosynthesis; coproporphyrinogen-III from 5-aminolevulinate: step 4/4. Catalyzes the decarboxylation of four acetate groups of uroporphyrinogen-III to yield coproporphyrinogen-III. The protein is Uroporphyrinogen decarboxylase of Acidovorax sp. (strain JS42).